The following is a 495-amino-acid chain: Lysine--tRNA ligase (495 aa).

Residues glutamate 406 and glutamate 413 each contribute to the Mg(2+) site.

The protein belongs to the class-II aminoacyl-tRNA synthetase family. Homodimer. The cofactor is Mg(2+).

It is found in the cytoplasm. The enzyme catalyses tRNA(Lys) + L-lysine + ATP = L-lysyl-tRNA(Lys) + AMP + diphosphate. The chain is Lysine--tRNA ligase from Leptospira interrogans serogroup Icterohaemorrhagiae serovar copenhageni (strain Fiocruz L1-130).